The sequence spans 811 residues: Glycerol-3-phosphate acyltransferase (811 aa).

Residues 308–313 carry the HXXXXD motif motif; sequence CHRSHM.

The protein belongs to the GPAT/DAPAT family.

The protein resides in the cell inner membrane. It catalyses the reaction sn-glycerol 3-phosphate + an acyl-CoA = a 1-acyl-sn-glycero-3-phosphate + CoA. It participates in phospholipid metabolism; CDP-diacylglycerol biosynthesis; CDP-diacylglycerol from sn-glycerol 3-phosphate: step 1/3. This Pseudoalteromonas atlantica (strain T6c / ATCC BAA-1087) protein is Glycerol-3-phosphate acyltransferase.